The sequence spans 359 residues: Phosphoserine aminotransferase (359 aa).

R41 is a binding site for L-glutamate. Pyridoxal 5'-phosphate-binding positions include 75–76 (AS), W101, T152, D171, and Q194. Residue K195 is modified to N6-(pyridoxal phosphate)lysine. 236 to 237 (NT) lines the pyridoxal 5'-phosphate pocket.

The protein belongs to the class-V pyridoxal-phosphate-dependent aminotransferase family. SerC subfamily. Homodimer. It depends on pyridoxal 5'-phosphate as a cofactor.

It is found in the cytoplasm. The enzyme catalyses O-phospho-L-serine + 2-oxoglutarate = 3-phosphooxypyruvate + L-glutamate. It catalyses the reaction 4-(phosphooxy)-L-threonine + 2-oxoglutarate = (R)-3-hydroxy-2-oxo-4-phosphooxybutanoate + L-glutamate. It functions in the pathway amino-acid biosynthesis; L-serine biosynthesis; L-serine from 3-phospho-D-glycerate: step 2/3. Its pathway is cofactor biosynthesis; pyridoxine 5'-phosphate biosynthesis; pyridoxine 5'-phosphate from D-erythrose 4-phosphate: step 3/5. Catalyzes the reversible conversion of 3-phosphohydroxypyruvate to phosphoserine and of 3-hydroxy-2-oxo-4-phosphonooxybutanoate to phosphohydroxythreonine. The sequence is that of Phosphoserine aminotransferase from Acinetobacter baumannii (strain ACICU).